Consider the following 316-residue polypeptide: Pantothenate kinase (316 aa).

95-102 contributes to the ATP binding site; the sequence is GSVAVGKS.

This sequence belongs to the prokaryotic pantothenate kinase family.

It localises to the cytoplasm. The catalysed reaction is (R)-pantothenate + ATP = (R)-4'-phosphopantothenate + ADP + H(+). Its pathway is cofactor biosynthesis; coenzyme A biosynthesis; CoA from (R)-pantothenate: step 1/5. This Klebsiella pneumoniae (strain 342) protein is Pantothenate kinase.